Reading from the N-terminus, the 90-residue chain is c-Myc-binding protein homolog (90 aa).

It belongs to the AMY1 family.

It localises to the nucleus. The protein is c-Myc-binding protein homolog (mycbp) of Dictyostelium discoideum (Social amoeba).